A 228-amino-acid polypeptide reads, in one-letter code: 2,3-bisphosphoglycerate-dependent phosphoglycerate mutase (228 aa).

Residues 8–15, 21–22, Arg-60, 87–90, Lys-98, 114–115, and 183–184 contribute to the substrate site; these read RHGQSVWN, TG, ERHY, RR, and GN. His-9 acts as the Tele-phosphohistidine intermediate in catalysis. Residue Glu-87 is the Proton donor/acceptor of the active site.

It belongs to the phosphoglycerate mutase family. BPG-dependent PGAM subfamily.

It carries out the reaction (2R)-2-phosphoglycerate = (2R)-3-phosphoglycerate. It participates in carbohydrate degradation; glycolysis; pyruvate from D-glyceraldehyde 3-phosphate: step 3/5. In terms of biological role, catalyzes the interconversion of 2-phosphoglycerate and 3-phosphoglycerate. This Staphylococcus carnosus (strain TM300) protein is 2,3-bisphosphoglycerate-dependent phosphoglycerate mutase.